Here is a 149-residue protein sequence, read N- to C-terminus: Ribosome maturation factor RimP (149 aa).

It belongs to the RimP family.

It localises to the cytoplasm. In terms of biological role, required for maturation of 30S ribosomal subunits. The protein is Ribosome maturation factor RimP of Neisseria meningitidis serogroup A / serotype 4A (strain DSM 15465 / Z2491).